We begin with the raw amino-acid sequence, 547 residues long: Apolipoprotein N-acyltransferase (547 aa).

Helical transmembrane passes span 31–51 (ILSGILVGTSYIPFPPWALIF), 71–91 (FWAGWVTQFILTLIGFHWIAY), 106–126 (LALLLFCAFMHLYIPVAVAAG), 180–200 (LVGFHGLSAVVLLFNAWMGYV), and 210–230 (ALSHLSLLALTFAALVGWGFW). The 269-residue stretch at 247 to 515 (VQANIGNLEK…KYLKNAPLTF (269 aa)) folds into the CN hydrolase domain. Glu294 serves as the catalytic Proton acceptor. The active site involves Lys364. Cys418 acts as the Nucleophile in catalysis. A helical transmembrane segment spans residues 515 to 535 (FFVQWGHWDWIVILLVLGAVI).

The protein belongs to the CN hydrolase family. Apolipoprotein N-acyltransferase subfamily.

It localises to the cell inner membrane. It catalyses the reaction N-terminal S-1,2-diacyl-sn-glyceryl-L-cysteinyl-[lipoprotein] + a glycerophospholipid = N-acyl-S-1,2-diacyl-sn-glyceryl-L-cysteinyl-[lipoprotein] + a 2-acyl-sn-glycero-3-phospholipid + H(+). The protein operates within protein modification; lipoprotein biosynthesis (N-acyl transfer). Its function is as follows. Catalyzes the phospholipid dependent N-acylation of the N-terminal cysteine of apolipoprotein, the last step in lipoprotein maturation. This chain is Apolipoprotein N-acyltransferase, found in Bdellovibrio bacteriovorus (strain ATCC 15356 / DSM 50701 / NCIMB 9529 / HD100).